Here is a 172-residue protein sequence, read N- to C-terminus: Cytochrome b6-f complex iron-sulfur subunit (172 aa).

Residues 17–39 (VFLNALLSSSVGVVVVGTLYPVV) traverse the membrane as a helical segment. One can recognise a Rieske domain in the interval 61 to 161 (GKPISVSELL…ATVDGDNVRF (101 aa)). Residues Cys-107, His-109, Cys-125, and His-128 each contribute to the [2Fe-2S] cluster site. Cys-112 and Cys-127 are disulfide-bonded.

This sequence belongs to the Rieske iron-sulfur protein family. As to quaternary structure, the 4 large subunits of the cytochrome b6-f complex are cytochrome b6, subunit IV (17 kDa polypeptide, PetD), cytochrome f and the Rieske protein, while the 4 small subunits are PetG, PetL, PetM and PetN. The complex functions as a dimer. It depends on [2Fe-2S] cluster as a cofactor.

It is found in the cellular thylakoid membrane. It carries out the reaction 2 oxidized [plastocyanin] + a plastoquinol + 2 H(+)(in) = 2 reduced [plastocyanin] + a plastoquinone + 4 H(+)(out). Functionally, component of the cytochrome b6-f complex, which mediates electron transfer between photosystem II (PSII) and photosystem I (PSI), cyclic electron flow around PSI, and state transitions. The polypeptide is Cytochrome b6-f complex iron-sulfur subunit (Synechococcus sp. (strain JA-3-3Ab) (Cyanobacteria bacterium Yellowstone A-Prime)).